A 491-amino-acid polypeptide reads, in one-letter code: Cysteine--tRNA ligase (491 aa).

Zn(2+) is bound at residue cysteine 29. Residues 31–41 (PTVYDFAHIGN) carry the 'HIGH' region motif. Zn(2+) is bound by residues cysteine 227, histidine 252, and glutamate 256. Positions 285–289 (KMSKS) match the 'KMSKS' region motif. Residue lysine 288 coordinates ATP.

The protein belongs to the class-I aminoacyl-tRNA synthetase family. As to quaternary structure, monomer. The cofactor is Zn(2+).

It is found in the cytoplasm. It catalyses the reaction tRNA(Cys) + L-cysteine + ATP = L-cysteinyl-tRNA(Cys) + AMP + diphosphate. The polypeptide is Cysteine--tRNA ligase (Rhodopseudomonas palustris (strain TIE-1)).